A 115-amino-acid polypeptide reads, in one-letter code: DNA-directed RNA polymerase II subunit RPB11-b2 (115 aa).

This sequence belongs to the archaeal Rpo11/eukaryotic RPB11/RPC19 RNA polymerase subunit family. As to quaternary structure, component of the RNA polymerase II (Pol II) complex consisting of 12 subunits.

Its subcellular location is the nucleus. Functionally, DNA-dependent RNA polymerase catalyzes the transcription of DNA into RNA using the four ribonucleoside triphosphates as substrates. Component of RNA polymerase II which synthesizes mRNA precursors and many functional non-coding RNAs. Pol II is the central component of the basal RNA polymerase II transcription machinery. It is composed of mobile elements that move relative to each other. RPB11 is part of the core element with the central large cleft. This chain is DNA-directed RNA polymerase II subunit RPB11-b2 (POLR2J3), found in Homo sapiens (Human).